A 252-amino-acid chain; its full sequence is Probable ABC transporter ATP-binding protein p29 (252 aa).

In terms of domain architecture, ABC transporter spans 8-252 (LEIKNLTFKN…NILDQVFKND (245 aa)). Position 42–49 (42–49 (GSSGQGKS)) interacts with ATP.

This sequence belongs to the ABC transporter superfamily.

Its function is as follows. Part of a high-affinity transport system. The sequence is that of Probable ABC transporter ATP-binding protein p29 from Mesomycoplasma hyorhinis (Mycoplasma hyorhinis).